The primary structure comprises 412 residues: Serine hydroxymethyltransferase (412 aa).

Residues L117 and 121–123 (GHL) contribute to the (6S)-5,6,7,8-tetrahydrofolate site. K226 is modified (N6-(pyridoxal phosphate)lysine). 349–351 (SPF) contacts (6S)-5,6,7,8-tetrahydrofolate.

Belongs to the SHMT family. Homodimer. It depends on pyridoxal 5'-phosphate as a cofactor.

Its subcellular location is the cytoplasm. It catalyses the reaction (6R)-5,10-methylene-5,6,7,8-tetrahydrofolate + glycine + H2O = (6S)-5,6,7,8-tetrahydrofolate + L-serine. It participates in one-carbon metabolism; tetrahydrofolate interconversion. It functions in the pathway amino-acid biosynthesis; glycine biosynthesis; glycine from L-serine: step 1/1. Functionally, catalyzes the reversible interconversion of serine and glycine with tetrahydrofolate (THF) serving as the one-carbon carrier. This reaction serves as the major source of one-carbon groups required for the biosynthesis of purines, thymidylate, methionine, and other important biomolecules. Also exhibits THF-independent aldolase activity toward beta-hydroxyamino acids, producing glycine and aldehydes, via a retro-aldol mechanism. This Geobacillus thermodenitrificans (strain NG80-2) protein is Serine hydroxymethyltransferase.